The sequence spans 361 residues: tRNA-specific 2-thiouridylase MnmA (361 aa).

Residues 6-13 (AMSGGVDS) and L32 contribute to the ATP site. C101 functions as the Nucleophile in the catalytic mechanism. A disulfide bridge links C101 with C194. G125 provides a ligand contact to ATP. Residues 144–146 (KDQ) are interaction with tRNA. C194 functions as the Cysteine persulfide intermediate in the catalytic mechanism.

It belongs to the MnmA/TRMU family.

It is found in the cytoplasm. It carries out the reaction S-sulfanyl-L-cysteinyl-[protein] + uridine(34) in tRNA + AH2 + ATP = 2-thiouridine(34) in tRNA + L-cysteinyl-[protein] + A + AMP + diphosphate + H(+). Functionally, catalyzes the 2-thiolation of uridine at the wobble position (U34) of tRNA, leading to the formation of s(2)U34. The polypeptide is tRNA-specific 2-thiouridylase MnmA (Corynebacterium aurimucosum (strain ATCC 700975 / DSM 44827 / CIP 107346 / CN-1) (Corynebacterium nigricans)).